Consider the following 208-residue polypeptide: Glutathione S-transferase 1 (208 aa).

The GST N-terminal domain maps to 1-80; that stretch reads MDFYYLPGSA…YLVEKYGKTD (80 aa). Glutathione-binding positions include Ser-9, 50 to 52, and 64 to 66; these read HTI and ESR. A GST C-terminal domain is found at 86-207; it reads CPKKRAVINQ…AGCLEFKKYF (122 aa).

Belongs to the GST superfamily. Theta family. In terms of assembly, homodimer.

It catalyses the reaction RX + glutathione = an S-substituted glutathione + a halide anion + H(+). In terms of biological role, conjugation of reduced glutathione to a wide number of exogenous and endogenous hydrophobic electrophiles. The sequence is that of Glutathione S-transferase 1 (Gst1) from Musca domestica (House fly).